An 818-amino-acid chain; its full sequence is Sodium/hydrogen exchanger 1 (818 aa).

The Extracellular segment spans residues 1–98 (MLLWPGASGL…FPVLGIDYQH (98 aa)). The tract at residues 44-76 (STIRGSEPPRERSIGDVTTAPPELAPESRPVNH) is disordered. The N-linked (GlcNAc...) asparagine glycan is linked to Asn75. Residues 99–121 (VRIPFEIALWILLACLMKIGFHV) form a helical membrane-spanning segment. Over 122–130 (IPTISSIVP) the chain is Cytoplasmic. A helical transmembrane segment spans residues 131–148 (ESCLLIVVGLLVGGLIKG). Residues 149 to 158 (VGETPPILQS) are Extracellular-facing. A helical transmembrane segment spans residues 159-176 (EVFFLFLLPPIILDAGYF). At 177–186 (LPLRQFTENL) the chain is on the cytoplasmic side. The chain crosses the membrane as a helical span at residues 187–215 (GTILIFAVVGTLWNAFFLGGLMYAVCLVG). The Extracellular segment spans residues 216-222 (GEQINNI). The chain crosses the membrane as a helical span at residues 223–249 (GLLENLLFGSIISAVDPVAVLAVFEEI). Topologically, residues 250-252 (HIN) are cytoplasmic. The chain crosses the membrane as a helical span at residues 253–283 (ELLHILVFGESLLNDAVTVVLYHLFEEFANY). Residues 284 to 287 (DRVG) are Extracellular-facing. The chain crosses the membrane as a helical span at residues 288–322 (IVDIILGFLSFFVVSLGGVFVGVVYGVIAAFTSRF). Residues 323–328 (TSHIRV) are Cytoplasmic-facing. The chain crosses the membrane as a helical span at residues 329 to 341 (IEPLFVFLYSYMA). Topologically, residues 342–350 (YLSAELFHL) are extracellular. A helical transmembrane segment spans residues 351–371 (SGIMALIASGVVMRPYVEANI). The Cytoplasmic portion of the chain corresponds to 372–373 (SH). The helical transmembrane segment at 374–404 (KSHTTIKYFLKMWSSVSETLIFIFLGVSTVA) threads the bilayer. Topologically, residues 405–410 (GSHHWN) are extracellular. The chain crosses the membrane as a helical span at residues 411-438 (WTFVISTLLFCLIARVLGVLGLTWFINK). Topologically, residues 439–444 (FRIVKL) are cytoplasmic. The chain crosses the membrane as a helical span at residues 445-469 (TPKDQFIIAYGGLRGAIAFSLGYLL). Topologically, residues 470–475 (DKKHFP) are extracellular. The chain crosses the membrane as a helical span at residues 476 to 505 (MCDLFLTAIITVIFFTVFVQGMTIRPLVDL). An interaction with TESC region spans residues 503–545 (VDLLAVKKKQETKRSINEEIHTQFLDHLLTGIEDICGHYGHHH). At 506-818 (LAVKKKQETK…EGEPFIPKGQ (313 aa)) the chain is on the cytoplasmic side. The segment at 509–516 (KKKQETKR) is PI(4,5)P2-binding region. The interaction with CHP2 stretch occupies residues 515–545 (KRSINEEIHTQFLDHLLTGIEDICGHYGHHH). Residues 540-545 (HYGHHH) form a confers pH-dependent PI(4,5)P2 binding region. The tract at residues 552–560 (RFNKKYVKK) is PI(4,5)P2-binding region. Ser599 and Ser602 each carry phosphoserine. Thr603 is modified (phosphothreonine). A phosphoserine mark is found at Ser605 and Ser648. The interaction with TESC stretch occupies residues 633 to 818 (KILRNNLQKT…EGEPFIPKGQ (186 aa)). The segment at 633–818 (KILRNNLQKT…EGEPFIPKGQ (186 aa)) is interaction with CALM1. The interaction with PPP3CA stretch occupies residues 684 to 687 (LTVP). Phosphoserine is present on residues Ser693, Ser697, and Ser703. An interaction with PPP3CA region spans residues 715–720 (PVITID). Residues Ser723, Ser726, and Ser729 each carry the phosphoserine modification. The tract at residues 741–818 (VLGLSRDPGR…EGEPFIPKGQ (78 aa)) is disordered. Residue Thr782 is modified to Phosphothreonine. Polar residues predominate over residues 785–794 (PSDSPSSQRI). 3 positions are modified to phosphoserine: Ser788, Ser790, and Ser799.

Belongs to the monovalent cation:proton antiporter 1 (CPA1) transporter (TC 2.A.36) family. In terms of assembly, homodimer; dimerization is crucial for its function. Oligomer. Interacts with CALM in a calcium-dependent manner. Interacts with TESC. Interacts (via the juxtamembrane region of the cytoplasmic C-terminal domain) with CHP1; the interaction occurs at the plasma membrane in a calcium-dependent manner. Interacts with CHP2; the interaction occurs in a calcium-dependent manner. Interacts with EZR; regulates the cytoskeletal interactions of SLC9A1 and promotes stress fiber formation. Ubiquitinated, leading to its degradation by the proteasome. Ubiquitination is reduced by CHP1. Post-translationally, O-glycosylated. In terms of processing, palmitoylated; may play a major role in SLC9A1 regulation. Phosphorylation at Thr-782 increases SLC9A1 activity. Specifically dephosphorylated at Thr-782 by PPP3CA that negatively regulates SLC9A1 activity. Phosphorylation at Ser-648 by AKT1 reduces SLC9A1 binding to CALM1.

It is found in the cell membrane. The protein resides in the basolateral cell membrane. The catalysed reaction is Na(+)(in) + H(+)(out) = Na(+)(out) + H(+)(in). It catalyses the reaction Li(+)(out) + H(+)(in) = Li(+)(in) + H(+)(out). The enzyme catalyses Li(+)(in) + Na(+)(out) = Li(+)(out) + Na(+)(in). With respect to regulation, activated at acidic pHs. Inhibited by amiloride and 5-amino-substituted derivatives. Inhibited by cariporide and eniporide. Phosphatidylinositol 4,5-bisphosphate (PI(4,5)P2) and phosphatidylinositol 3,4,5-trisphosphate (PI(3,4,5)P3) bind and differentially regulate SLC9A1 activity. Its function is as follows. Electroneutral Na(+) /H(+) antiporter that extrudes Na(+) in exchange for external protons driven by the inward sodium ion chemical gradient, protecting cells from acidification that occurs from metabolism. Exchanges intracellular H(+) ions for extracellular Na(+) in 1:1 stoichiometry. Plays a key role in maintening intracellular pH neutral and cell volume, and thus is important for cell growth, proliferation, migration and survival. In addition, can transport lithium Li(+) and also functions as a Na(+)/Li(+) antiporter. SLC9A1 also functions in membrane anchoring and organization of scaffolding complexes that coordinate signaling inputs. The protein is Sodium/hydrogen exchanger 1 (SLC9A1) of Bos taurus (Bovine).